The following is an 846-amino-acid chain: Protein IRS1 (846 aa).

4 disordered regions span residues 1–82 (MAQR…NFWH), 366–385 (TGTAAGTTSPPAASGTETEA), 606–626 (WLMEQPPPPSRQTKPDAATMP), and 714–846 (QVIP…HVHH). A compositionally biased stretch (gly residues) spans 16–25 (RGRGAGGPSG). The segment covering 26–56 (VGSSPPSSCVPMGAPSTAGTGASAAATTTPG) has biased composition (low complexity). A compositionally biased stretch (acidic residues) spans 722–732 (EPEDDDEDPTY). Basic residues predominate over residues 832-846 (RPKKCQTHAPHHVHH).

This sequence belongs to the herpesviridae US22 family. In terms of assembly, interacts (via N-terminus) with the viral DNA polymerase accessory subunit UL44. Interacts (via C-terminus) with host EIF2AK2/PKR.

It is found in the virion. The protein localises to the host cytoplasm. The protein resides in the host nucleus. Inhibits the establishment of the antiviral state in the infected cell. Prevents the phosphorylation of the host eukaryotic translation initiation factor eIF-2alpha and thus the shutoff of viral and cellular protein synthesis by directly interacting with EIF2AK2/PKR. May also participate in viral DNA replication by interacting with the DNA polymerase accessory protein and the lytic origin of replication, oriLyt. The protein is Protein IRS1 (IRS1) of Homo sapiens (Human).